Here is a 387-residue protein sequence, read N- to C-terminus: F-box only protein 4 (387 aa).

3 positions are modified to phosphoserine: S11, S12, and S48. One can recognise an F-box domain in the interval 56-102; it reads ASSLTRLPIDVQLYILSFLSPHDLCQLGSTSRYWNETVRDPILWRYF.

Homodimer. Part of the SCF (SKP1-CUL1-F-box) E3 ubiquitin-protein ligase complex SCF(FBXO4) formed of CUL1, SKP1, RBX1 and FBXO4. Interacts with TERF1; this interaction is prevented in the presence of GNL3L. Identified in a complex with CRYAB and CCND1. Post-translationally, phosphorylation at Ser-11 varies during the cell cycle. It is low in resting cells and high in the S phase and the G2/M phase of the cell cycle. Phosphorylation is decreased during late G1 phase. Phosphorylation at Ser-11 promotes homodimerization and is necessary for optimal ubiquitin ligase activity towards CCND1.

The protein localises to the cytoplasm. The protein operates within protein modification; protein ubiquitination. In terms of biological role, substrate recognition component of a SCF (SKP1-CUL1-F-box protein) E3 ubiquitin-protein ligase complex that mediates the ubiquitination and subsequent proteasomal degradation of target proteins. Promotes ubiquitination of cyclin-D1 (CCND1) and its subsequent proteasomal degradation. However, it does not act as a major regulator of CCND1 stability during the G1/S transition. Recognizes TERF1 and promotes its ubiquitination together with UBE2D1. Promotes ubiquitination of FXR1 following phosphorylation of FXR1 by GSK3B, leading to FXR1 degradation by the proteasome. In Bos taurus (Bovine), this protein is F-box only protein 4 (FBXO4).